Here is a 460-residue protein sequence, read N- to C-terminus: MPRALSIKFDNTYMDLYDELPESKLLYDEEFSYLLDAVRQNGVCVVDFLTLTPKELARLIQRSINEVFRFQQLLVHEYNEKYLEICEKNSISPDNGPECFTTADVAMDELLGGGIFTHGITEIFGESSTGKSQLLMQLALSVQLSEPAGGLGGKCVYITTEGDLPTQRLESMLSSRPAYEKLGITQSNIFTVSCNDLINQEHIINVQLPILLERSKGSIKLVIIDSISHHLRVELQNKSFRESQENKNYLDRMAEKLQILAHDYSLSVVVANQVGDKPLANSPVAHRTYVTDYDYQLGWLVGWKNSTILYRQMNSLLGASSNNDEILSDDEDYMLIERVMSTVNDRNYDFFSKKKPPIIENKTVERNSSSPISRQSKKRKFDYRVPNLGLTWSNHVSTRILLQKSFKASTIIQRGEAHLYKGGDSASFWQVKRTMKVVYSTFAKPGQIAYQITKRGIETA.

125-132 (GESSTGKS) provides a ligand contact to ATP.

Belongs to the RecA family.

It is found in the nucleus. Functionally, participates in the repair of X-ray-induced damage to DNA and in meiosis. It may act in part by stabilizing a repair complex of other RAD genes. In Saccharomyces cerevisiae (strain ATCC 204508 / S288c) (Baker's yeast), this protein is DNA repair protein RAD57 (RAD57).